Here is a 317-residue protein sequence, read N- to C-terminus: MPMQGAQRRLLGSLNSTPTATPNLGLAANHTGAPCLEVSIPHGLFLSLGLVSLVENVLVVAAIAKNRNLHSPMYCFICCLALSDLLVSGSNMLETAVILLLEAGALATRASVVQQLQNTIDVLTCSSMLCSLCFLGAIAVDRYVSIFYALRYHSIVTLPRARRAIAAIWVASVLSSTLFIAYCDHAAVLLCLVVFFLAMLVLMAVLYVHMLARACQHAQGITRLHKRQLPAHQGFGLRGAATLTILLGIFFLCWGPFFLHLMLVVLCPQHLTCSCIFKNFKVFLTLIICNTIIDPLIYAFRSQELCRTLKEVLLCSW.

Topologically, residues 1-37 are extracellular; it reads MPMQGAQRRLLGSLNSTPTATPNLGLAANHTGAPCLE. The N-linked (GlcNAc...) asparagine glycan is linked to N29. Residues 38–63 traverse the membrane as a helical segment; that stretch reads VSIPHGLFLSLGLVSLVENVLVVAAI. The Cytoplasmic segment spans residues 64-72; the sequence is AKNRNLHSP. The chain crosses the membrane as a helical span at residues 73 to 93; that stretch reads MYCFICCLALSDLLVSGSNML. The Extracellular segment spans residues 94 to 118; the sequence is ETAVILLLEAGALATRASVVQQLQN. A helical transmembrane segment spans residues 119-140; the sequence is TIDVLTCSSMLCSLCFLGAIAV. Over 141–163 the chain is Cytoplasmic; that stretch reads DRYVSIFYALRYHSIVTLPRARR. Residues 164-183 form a helical membrane-spanning segment; that stretch reads AIAAIWVASVLSSTLFIAYC. Over 184–191 the chain is Extracellular; that stretch reads DHAAVLLC. A helical transmembrane segment spans residues 192–211; the sequence is LVVFFLAMLVLMAVLYVHML. Over 212–240 the chain is Cytoplasmic; that stretch reads ARACQHAQGITRLHKRQLPAHQGFGLRGA. The helical transmembrane segment at 241-266 threads the bilayer; the sequence is ATLTILLGIFFLCWGPFFLHLMLVVL. Residues 267 to 279 lie on the Extracellular side of the membrane; it reads CPQHLTCSCIFKN. The helical transmembrane segment at 280–300 threads the bilayer; that stretch reads FKVFLTLIICNTIIDPLIYAF. Topologically, residues 301–317 are cytoplasmic; it reads RSQELCRTLKEVLLCSW. A lipid anchor (S-palmitoyl cysteine) is attached at C315.

This sequence belongs to the G-protein coupled receptor 1 family. Interacts with MGRN1, but does not undergo MGRN1-mediated ubiquitination; this interaction competes with GNAS-binding and thus inhibits agonist-induced cAMP production. Interacts with OPN3; the interaction results in a decrease in MC1R-mediated cAMP signaling and ultimately a decrease in melanin production in melanocytes.

The protein localises to the cell membrane. In terms of biological role, receptor for MSH (alpha, beta and gamma) and ACTH. The activity of this receptor is mediated by G proteins which activate adenylate cyclase. Mediates melanogenesis, the production of eumelanin (black/brown) and phaeomelanin (red/yellow), via regulation of cAMP signaling in melanocytes. The sequence is that of Melanocyte-stimulating hormone receptor (MC1R) from Alouatta caraya (Black howler monkey).